Reading from the N-terminus, the 579-residue chain is Nuclear receptor coactivator 5 (579 aa).

N-acetylmethionine is present on Met1. Residues 1 to 77 (MNTAPSRPSP…DIRDHRDSRS (77 aa)) are disordered. Residues 1–158 (MNTAPSRPSP…RDSFDGRGPP (158 aa)) are transcription repression. Phosphothreonine is present on Thr3. 9 positions are modified to phosphoserine: Ser9, Ser21, Ser29, Ser34, Ser96, Ser116, Ser126, Ser143, and Ser151. The span at 11–77 (TRRDPYSFGD…DIRDHRDSRS (67 aa)) shows a compositional bias: basic and acidic residues. The disordered stretch occupies residues 148 to 172 (YRDSFDGRGPPGPESQSRAKERLKR). At Thr274 the chain carries Phosphothreonine. Positions 345–349 (LINLL) match the LXXLL motif motif. 2 positions are modified to phosphoserine: Ser378 and Ser381. Disordered stretches follow at residues 378–428 (SADS…PTSQ) and 446–529 (ANSS…RPVS). 2 stretches are compositionally biased toward low complexity: residues 395 to 420 (SGSS…ATPT) and 446 to 460 (ANSS…TGSS). Residues 458 to 579 (GSSQNQNFST…APMGSYQRHY (122 aa)) form a transcription activation region. The segment covering 461-485 (QNQNFSTAANSQPQQRPQASGNQPP) has biased composition (polar residues).

As to quaternary structure, binds HTATIP2/TIP30. Interacts with YLPM1. Forms a complex with ILF2, ILF3, YLPM1, KHDRBS1, RBMX and PPP1CA.

It localises to the nucleus. Nuclear receptor coregulator that can have both coactivator and corepressor functions. Interacts with nuclear receptors for steroids (ESR1 and ESR2) independently of the steroid binding domain (AF-2) of the ESR receptors, and with the orphan nuclear receptor NR1D2. Involved in the coactivation of nuclear steroid receptors (ER) as well as the corepression of MYC in response to 17-beta-estradiol (E2). In Mus musculus (Mouse), this protein is Nuclear receptor coactivator 5 (Ncoa5).